The primary structure comprises 376 residues: Putative glutamate--cysteine ligase 2 (376 aa).

It belongs to the glutamate--cysteine ligase type 2 family. YbdK subfamily.

It carries out the reaction L-cysteine + L-glutamate + ATP = gamma-L-glutamyl-L-cysteine + ADP + phosphate + H(+). Functionally, ATP-dependent carboxylate-amine ligase which exhibits weak glutamate--cysteine ligase activity. The sequence is that of Putative glutamate--cysteine ligase 2 from Corynebacterium glutamicum (strain R).